The primary structure comprises 181 residues: Large ribosomal subunit protein uL6 (181 aa).

Belongs to the universal ribosomal protein uL6 family. Part of the 50S ribosomal subunit.

Functionally, this protein binds to the 23S rRNA, and is important in its secondary structure. It is located near the subunit interface in the base of the L7/L12 stalk, and near the tRNA binding site of the peptidyltransferase center. The chain is Large ribosomal subunit protein uL6 from Rhodopirellula baltica (strain DSM 10527 / NCIMB 13988 / SH1).